A 351-amino-acid chain; its full sequence is Anthranilate phosphoribosyltransferase (351 aa).

Residues Gly92, 95–96, Thr100, 102–105, 120–128, and Ser132 contribute to the 5-phospho-alpha-D-ribose 1-diphosphate site; these read GD, NIST, and KHGNRAASS. Anthranilate is bound at residue Gly92. Ser104 is a Mg(2+) binding site. Asn123 serves as a coordination point for anthranilate. Residue Arg178 participates in anthranilate binding. The Mg(2+) site is built by Asp236 and Glu237.

It belongs to the anthranilate phosphoribosyltransferase family. Homodimer. It depends on Mg(2+) as a cofactor.

The enzyme catalyses N-(5-phospho-beta-D-ribosyl)anthranilate + diphosphate = 5-phospho-alpha-D-ribose 1-diphosphate + anthranilate. It functions in the pathway amino-acid biosynthesis; L-tryptophan biosynthesis; L-tryptophan from chorismate: step 2/5. Functionally, catalyzes the transfer of the phosphoribosyl group of 5-phosphorylribose-1-pyrophosphate (PRPP) to anthranilate to yield N-(5'-phosphoribosyl)-anthranilate (PRA). The chain is Anthranilate phosphoribosyltransferase from Deinococcus geothermalis (strain DSM 11300 / CIP 105573 / AG-3a).